Reading from the N-terminus, the 146-residue chain is MANYELTYIVRPDLDKDAKAALVTRFDSILSDNGAKIDKSEDWDTRRFAYEINNYRQGTYHIVTFSSEDEKAVNEFDRLAKISGDILRHMIVAVDLEKLADAHAKQAAATQRAAERRAQREAERNAAQAQSSASNQARTAATTSGK.

A disordered region spans residues 106 to 146 (QAAATQRAAERRAQREAERNAAQAQSSASNQARTAATTSGK). The segment covering 113–124 (AAERRAQREAER) has biased composition (basic and acidic residues). Low complexity predominate over residues 125–146 (NAAQAQSSASNQARTAATTSGK).

Belongs to the bacterial ribosomal protein bS6 family.

Its function is as follows. Binds together with bS18 to 16S ribosomal RNA. This Oenococcus oeni (strain ATCC BAA-331 / PSU-1) protein is Small ribosomal subunit protein bS6.